The chain runs to 796 residues: Probable coatomer subunit beta' (796 aa).

WD repeat units follow at residues 4-42 (LDFQRKLLSHTERVKAVDFHPTEPWVIASHYNGQVGIWN), 46-84 (QTLVRSFDINDVPIRACAFIARKNWFVCGSDDFQVRVYN), 88-126 (GEKVTQFEAHPDYIRALVVHPTQPFLLTSSDDMTIKCFN), 131-170 (WKCVQTFEGHSRYVMSLAINPKDTNTFASSCLDGTVKVWS), 172-214 (GSSV…KVWD), and 218-256 (KACVRILEGHTNNVSFAFFHSKFPIIISGSEDGTVKIWH).

Belongs to the WD repeat COPB2 family. Oligomeric complex that consists of at least the alpha, beta, beta', gamma, delta, epsilon and zeta subunits.

It is found in the cytoplasm. The protein resides in the golgi apparatus membrane. It localises to the cytoplasmic vesicle. The protein localises to the COPI-coated vesicle membrane. In terms of biological role, the coatomer is a cytosolic protein complex that binds to dilysine motifs and reversibly associates with Golgi non-clathrin-coated vesicles, which further mediate biosynthetic protein transport from the ER, via the Golgi up to the trans Golgi network. Coatomer complex is required for budding from Golgi membranes, and is essential for the retrograde Golgi-to-ER transport of dilysine-tagged proteins. The chain is Probable coatomer subunit beta' (sec27) from Schizosaccharomyces pombe (strain 972 / ATCC 24843) (Fission yeast).